The primary structure comprises 352 residues: NADP-dependent oxidoreductase RED1 (352 aa).

NADP(+) contacts are provided by residues 166–169, Lys192, Tyr208, Asn231, and 285–287; these read GAVG and FIV.

This sequence belongs to the NADP-dependent oxidoreductase L4BD family.

It participates in mycotoxin biosynthesis. Its function is as follows. NADP-dependent oxidoreductase; part of the Tox1B locus, one of the 2 loci that mediate the biosynthesis of T-toxin, a family of linear polyketides 37 to 45 carbons in length, of which the major component is 41 carbons, and which leads to high virulence to maize. One of the PKSs (PKS1 or PKS2) could synthesize a precursor, used subsequently by the other PKS as starter unit, to add additional carbons. Variability in the length of the final carbon backbone C35-47 could be achieved by varying the number of condensation cycles, or use of different starter or extender units or might be due to decarboxylation of the penultimate product, catalyzed by DEC1. Additional proteins are required for the biosynthesis of T-toxin, including oxidoreductases RED1, RED2, RED3, LAM1 and OXI1, as well as esterase TOX9. This is NADP-dependent oxidoreductase RED1 from Cochliobolus heterostrophus (strain C4 / ATCC 48331 / race T) (Southern corn leaf blight fungus).